Here is a 329-residue protein sequence, read N- to C-terminus: Quinone oxidoreductase (329 aa).

An N-acetylalanine modification is found at alanine 2. Lysine 23 carries the N6-acetyllysine modification. Residues tyrosine 53, 158 to 161 (SGGV), glycine 181, histidine 200, asparagine 229, 246 to 249 (VGCR), and 269 to 271 (VSL) each bind NADP(+). The residue at position 296 (lysine 296) is an N6-succinyllysine.

This sequence belongs to the zinc-containing alcohol dehydrogenase family. Quinone oxidoreductase subfamily. Homotetramer.

It localises to the cytoplasm. It carries out the reaction 2 a quinone + NADPH + H(+) = 2 a 1,4-benzosemiquinone + NADP(+). Its function is as follows. Does not have alcohol dehydrogenase activity. Binds NADP and acts through a one-electron transfer process. Orthoquinones, such as 1,2-naphthoquinone or 9,10-phenanthrenequinone, are the best substrates (in vitro). May act in the detoxification of xenobiotics. Interacts with (AU)-rich elements (ARE) in the 3'-UTR of target mRNA species and enhances their stability. NADPH binding interferes with mRNA binding. This chain is Quinone oxidoreductase (Cryz), found in Rattus norvegicus (Rat).